The primary structure comprises 131 residues: Snaclec coagulation factor IX/factor X-binding protein subunit A (131 aa).

One can recognise a C-type lectin domain in the interval 1 to 131; sequence DCLPGWSSHE…EEPQRFTCEI (131 aa). 3 disulfide bridges follow: cysteine 2–cysteine 13, cysteine 30–cysteine 129, and cysteine 104–cysteine 121. 3 residues coordinate Ca(2+): serine 41, glutamate 43, and glutamate 47. Glutamate 130 serves as a coordination point for Ca(2+).

The protein belongs to the snaclec family. As to quaternary structure, heterodimer of subunits A and B; disulfide-linked. Expressed by the venom gland.

Its subcellular location is the secreted. Functionally, anticoagulant protein which binds to coagulation factor IX (F9) and coagulation factor X (F10) in the presence of calcium. It may bind the gamma-carboxyglutamic acid-domain regions of factors with a 1 to 1 stoichiometry. The dissociation constant (K(d)) are 6.6 nM for factor IX (F9) and 125 nM for factor X (F10). Does not bind carbohydrates. The chain is Snaclec coagulation factor IX/factor X-binding protein subunit A from Echis carinatus (Saw-scaled viper).